We begin with the raw amino-acid sequence, 184 residues long: NADH-dependent flavin reductase subunit 2 (184 aa).

It belongs to the NADH-dependent flavin reductase family. Requires LJ_0548 for activity, but the exact composition of the enzyme is unclear.

It catalyses the reaction a reduced flavin + NAD(+) = an oxidized flavin + NADH + 2 H(+). Functionally, component of an enzyme that catalyzes the reduction of free flavins (FMN, FAD and riboflavin) by NADH; the reduced flavins produced by this reaction likely spontaneously react with oxygen, yielding hydrogen peroxide. Is responsible for the major H(2)O(2) production in L.johnsonii in the presence of oxygen. Cannot use NADPH instead of NADH as the electron donor. This chain is NADH-dependent flavin reductase subunit 2 (nfr2), found in Lactobacillus johnsonii (strain CNCM I-12250 / La1 / NCC 533).